The primary structure comprises 208 residues: Thymidylate kinase (208 aa).

Glycine 10–threonine 17 serves as a coordination point for ATP.

Belongs to the thymidylate kinase family.

The catalysed reaction is dTMP + ATP = dTDP + ADP. Functionally, phosphorylation of dTMP to form dTDP in both de novo and salvage pathways of dTTP synthesis. This Bacillus cereus (strain ATCC 10987 / NRS 248) protein is Thymidylate kinase.